Here is a 347-residue protein sequence, read N- to C-terminus: Dual specificity mitogen-activated protein kinase kinase mek-1 (347 aa).

The tract at residues 1–42 (MERDFDLGMGRPGGLGGLGGEPIMQQMPQPAPHHPSRSSNDH) is disordered. Residues 10–20 (GRPGGLGGLGG) are compositionally biased toward gly residues. The Protein kinase domain occupies 72-325 (LQFVEDIGHG…YDMLLQHPFV (254 aa)). Residues 78-86 (IGHGSCGTV) and Lys99 each bind ATP. Residue Asp193 is the Proton acceptor of the active site. Residues Ser221 and Ser225 each carry the phosphoserine modification.

This sequence belongs to the protein kinase superfamily. STE Ser/Thr protein kinase family. MAP kinase kinase subfamily. In terms of assembly, interacts with shc-1; the interaction is independent of mek-1 catalytic activity, is constitutive and may facilitate mlk-1-mediated phosphorylation by bringing mlk-1 and mek-1 together. Requires Mg(2+) as cofactor. May be phosphorylated at Ser-221 and/or Ser-225 by mlk-1. As to expression, expressed in pharyngeal muscles, uterine endothelial cells, intestine and in neurons of ring ganglia, ventral ganglion and ganglia around anus. Expressed also in hypodermis and body muscles.

It carries out the reaction L-seryl-[protein] + ATP = O-phospho-L-seryl-[protein] + ADP + H(+). The catalysed reaction is L-threonyl-[protein] + ATP = O-phospho-L-threonyl-[protein] + ADP + H(+). It catalyses the reaction L-tyrosyl-[protein] + ATP = O-phospho-L-tyrosyl-[protein] + ADP + H(+). Its activity is regulated as follows. May be activated by phosphorylation at Ser-221 and Ser-225. Dual specificity protein kinase which may phosphorylate kgb-1 and thereby is an essential component of the JNK pathway composed of mlk-1, mek-1 and kgb-1. May also have a synergistic role with sek-1 in phosphorylating pmk-1. Involved in the response to environmental stress including heavy metal ions (Cu(2+) and Cd(2+)), oxidative stress and starvation. In association with sek-1, regulates germline cell apoptosis in response to oxidative, osmotic and heat shock stresses. Involved in resistance to pathogenic bacteria infection. Involved in axon regeneration after injury. The protein is Dual specificity mitogen-activated protein kinase kinase mek-1 of Caenorhabditis elegans.